Here is a 349-residue protein sequence, read N- to C-terminus: Putative ABC transporter permease protein MJ0087 (349 aa).

A run of 9 helical transmembrane segments spans residues 15 to 35 (IIFG…ALCV), 69 to 89 (IFAA…MQCI), 100 to 120 (MGIS…FGFG), 135 to 155 (MITI…LLLA), 166 to 186 (ILAG…IQYF), 206 to 226 (AIWT…IYFM), 254 to 274 (LIGM…LGII), 295 to 315 (FLIP…DTFA), and 318 to 338 (IIAP…APMF).

It belongs to the binding-protein-dependent transport system permease family. FecCD subfamily.

Its subcellular location is the cell membrane. Its function is as follows. Probably part of a binding-protein-dependent transport system. Probably responsible for the translocation of the substrate across the membrane. The polypeptide is Putative ABC transporter permease protein MJ0087 (Methanocaldococcus jannaschii (strain ATCC 43067 / DSM 2661 / JAL-1 / JCM 10045 / NBRC 100440) (Methanococcus jannaschii)).